Consider the following 668-residue polypeptide: Protein brown (668 aa).

Topologically, residues 1-412 are cytoplasmic; it reads MPMDEGDAQG…TEDLANIRSG (412 aa). One can recognise an ABC transporter domain in the interval 31-328; that stretch reads YSFWNECRKQ…FTEGFMQPKN (298 aa). 63–70 contacts ATP; that stretch reads GGSGAGKT. Residues 413-433 traverse the membrane as a helical segment; it reads LIGFGFFMTTAVTLSLMYSGV. Over 434-453 the chain is Extracellular; the sequence is GGLTQRTVQDVGGSIFMLSN. The helical transmembrane segment at 454–474 threads the bilayer; the sequence is EMIFTFSYGVTYIFPAALPII. Topologically, residues 475 to 490 are cytoplasmic; it reads RREVAEGTYSLSAYYV. The chain crosses the membrane as a helical span at residues 491–511; that stretch reads ALVLSFVPVAFFKGYMFLSVI. The Extracellular portion of the chain corresponds to 512 to 524; sequence YASIYYTRGFLLY. Residues 525–545 form a helical membrane-spanning segment; sequence ITMGFLMSLSAIAAVGYGVFL. At 546 to 561 the chain is on the cytoplasmic side; it reads SSLFETDKMASECAAP. Residues 562–582 form a helical membrane-spanning segment; the sequence is FDLIFLIFGGTYMNVDSVPLL. Over 583–637 the chain is Extracellular; sequence KYFSLFFYSNEALMYNFWIDIDNIACXVNDEHPCCQTGLEVLQQASFRTADYTFW. A helical transmembrane segment spans residues 638-658; it reads LDCASLLVVALVFHIVSFTLI. Residues 659 to 668 are Cytoplasmic-facing; that stretch reads RRYINRSGYY.

It belongs to the ABC transporter superfamily. ABCG family. Eye pigment precursor importer (TC 3.A.1.204) subfamily. May form a heterodimer with w/white. In terms of tissue distribution, expressed in eyes.

The protein resides in the membrane. The enzyme catalyses guanine(out) + ATP + H2O = guanine(in) + ADP + phosphate + H(+). The catalysed reaction is riboflavin(in) + ATP + H2O = riboflavin(out) + ADP + phosphate + H(+). It catalyses the reaction (6S)-5,6,7,8-tetrahydrofolate(out) + ATP + H2O = (6S)-5,6,7,8-tetrahydrofolate(in) + ADP + phosphate + H(+). ATP-dependent transporter of the ATP-binding cassette (ABC) family which transports various molecules including bioamines, neurotransmitters and metabolic intermediates. In the eye and probably in association with w/white, required for the transport of the eye red pigment precursor, guanine, into pigment cell granules. In Malpighian tubules, involved in guanine uptake. Probably in association with w/white, involved in aging-induced intestinal stem cell proliferation in the midgut by regulating tetrahydrofolate transport. The polypeptide is Protein brown (Drosophila virilis (Fruit fly)).